The primary structure comprises 576 residues: Proline--tRNA ligase (576 aa).

This sequence belongs to the class-II aminoacyl-tRNA synthetase family. ProS type 1 subfamily. As to quaternary structure, homodimer.

It localises to the cytoplasm. It carries out the reaction tRNA(Pro) + L-proline + ATP = L-prolyl-tRNA(Pro) + AMP + diphosphate. In terms of biological role, catalyzes the attachment of proline to tRNA(Pro) in a two-step reaction: proline is first activated by ATP to form Pro-AMP and then transferred to the acceptor end of tRNA(Pro). As ProRS can inadvertently accommodate and process non-cognate amino acids such as alanine and cysteine, to avoid such errors it has two additional distinct editing activities against alanine. One activity is designated as 'pretransfer' editing and involves the tRNA(Pro)-independent hydrolysis of activated Ala-AMP. The other activity is designated 'posttransfer' editing and involves deacylation of mischarged Ala-tRNA(Pro). The misacylated Cys-tRNA(Pro) is not edited by ProRS. This is Proline--tRNA ligase from Bordetella parapertussis (strain 12822 / ATCC BAA-587 / NCTC 13253).